The chain runs to 90 residues: Putative large ribosomal subunit protein uL23c (90 aa).

Residues 1-46 (MDGIKYAVFTDKSIQLLGKKQYTSNVESRSTRTEIKHWVELWNSYE) are coded by first part of gene. Residues 47–90 (MNSHRLPGKGRRMGPIMGHTMHYRRMIITLQSSYSIPPLRKKRT) are coded by second part of gene.

The protein belongs to the universal ribosomal protein uL23 family. Part of the 50S ribosomal subunit.

It localises to the plastid. The protein resides in the chloroplast. Its function is as follows. Binds to 23S rRNA. This Spinacia oleracea (Spinach) protein is Putative large ribosomal subunit protein uL23c (rpl23).